The following is an 89-amino-acid chain: Small ribosomal subunit protein uS15 (89 aa).

Belongs to the universal ribosomal protein uS15 family. In terms of assembly, part of the 30S ribosomal subunit. Forms a bridge to the 50S subunit in the 70S ribosome, contacting the 23S rRNA.

In terms of biological role, one of the primary rRNA binding proteins, it binds directly to 16S rRNA where it helps nucleate assembly of the platform of the 30S subunit by binding and bridging several RNA helices of the 16S rRNA. Its function is as follows. Forms an intersubunit bridge (bridge B4) with the 23S rRNA of the 50S subunit in the ribosome. The sequence is that of Small ribosomal subunit protein uS15 from Mycobacterium leprae (strain Br4923).